The following is a 614-amino-acid chain: Serine/threonine-protein kinase Pkn1 (614 aa).

The 264-residue stretch at 13-276 folds into the Protein kinase domain; that stretch reads YKVIAELGHG…TSGEQLQVTL (264 aa). Residues 19 to 27 and lysine 42 contribute to the ATP site; that span reads LGHGLWSRD.

It belongs to the protein kinase superfamily. Ser/Thr protein kinase family. As to quaternary structure, interacts with PknD, interacts with and phosphorylates IncG. In terms of processing, autophosphorylates on serine and threonine residues. Present in elementary bodies 40 hours post-infection as 2 proteins of approximately 70 and 65 kDa; the smaller one may be due to differential phosphorylation or degradation.

It catalyses the reaction L-seryl-[protein] + ATP = O-phospho-L-seryl-[protein] + ADP + H(+). The catalysed reaction is L-threonyl-[protein] + ATP = O-phospho-L-threonyl-[protein] + ADP + H(+). In terms of biological role, together with the serine/threonine kinase PknD, may play a role in specific interactions with host proteins during host intracellular growth. Autophosphorylates and phosphorylates IncG, an inclusion-membrane protein required for the modification of the nascent chlamydial inclusion. The chain is Serine/threonine-protein kinase Pkn1 (pkn1) from Chlamydia trachomatis serovar L2 (strain ATCC VR-902B / DSM 19102 / 434/Bu).